The primary structure comprises 203 residues: Type III effector protein HopBF1 (203 aa).

The tract at residues 1–23 (MFNVSNNVAPSRYQGPSSTSVTP) is disordered. Residues S40, Q41, K42, D107, I109, and D114 each contribute to the ATP site. Residue D155 is part of the active site. An ATP-binding site is contributed by Q157.

This sequence belongs to the HopBF1 family.

The protein localises to the secreted. It is found in the host cell. The enzyme catalyses L-seryl-[protein] + ATP = O-phospho-L-seryl-[protein] + ADP + H(+). Effector protein that targets and inactivates the eukaryotic molecular chaperone HSP90 during infection. HopBF1 is recognized by HSP90 as a host client. As a result, HopBF1 phosphorylates HSP90, leading to the inactivation of the HSP90 ATPase activity and chaperone function. In vitro, can phosphorylate the recombinant yeast HSP82 (HSP90) and human HSP 90-beta on Ser-108. The protein is Type III effector protein HopBF1 of Ewingella americana (strain ATCC 33852 / DSM 4580 / CCUG 14506 / JCM 5911 / LMG 7869 / NCTC 12157 / CDC 1468-78).